The following is a 103-amino-acid chain: Large ribosomal subunit protein bL21 (103 aa).

The protein belongs to the bacterial ribosomal protein bL21 family. Part of the 50S ribosomal subunit. Contacts protein L20.

Functionally, this protein binds to 23S rRNA in the presence of protein L20. The protein is Large ribosomal subunit protein bL21 of Ralstonia nicotianae (strain ATCC BAA-1114 / GMI1000) (Ralstonia solanacearum).